Consider the following 164-residue polypeptide: Arginine repressor (164 aa).

The protein belongs to the ArgR family.

It is found in the cytoplasm. The protein operates within amino-acid biosynthesis; L-arginine biosynthesis [regulation]. Regulates arginine biosynthesis genes. This Mycobacterium avium (strain 104) protein is Arginine repressor.